A 182-amino-acid chain; its full sequence is Large ribosomal subunit protein bL25 (182 aa).

This sequence belongs to the bacterial ribosomal protein bL25 family. CTC subfamily. Part of the 50S ribosomal subunit; part of the 5S rRNA/L5/L18/L25 subcomplex. Contacts the 5S rRNA. Binds to the 5S rRNA independently of L5 and L18.

In terms of biological role, this is one of the proteins that binds to the 5S RNA in the ribosome where it forms part of the central protuberance. The protein is Large ribosomal subunit protein bL25 of Borrelia hermsii (strain HS1 / DAH).